We begin with the raw amino-acid sequence, 132 residues long: Myelin P2 protein (132 aa).

Position 2 is an N-acetylserine (serine 2). Arginine 107 is a binding site for (9Z)-octadecenoate. Arginine 107 lines the hexadecanoate pocket. Cysteine 118 and cysteine 125 are joined by a disulfide. (9Z)-octadecenoate is bound at residue 127–129; sequence RIY. Residue 127–129 participates in hexadecanoate binding; it reads RIY.

This sequence belongs to the calycin superfamily. Fatty-acid binding protein (FABP) family. In terms of assembly, monomer. In terms of tissue distribution, detected in spinal cord (at protein level).

It is found in the cytoplasm. May play a role in lipid transport protein in Schwann cells. May bind cholesterol. This is Myelin P2 protein (PMP2) from Equus caballus (Horse).